We begin with the raw amino-acid sequence, 462 residues long: Fumarate hydratase class II (462 aa).

Substrate is bound by residues 97 to 99 (SGT), 128 to 131 (HPND), 138 to 140 (STN), and threonine 186. Histidine 187 serves as the catalytic Proton donor/acceptor. Serine 317 is a catalytic residue. Substrate-binding positions include serine 318 and 323 to 325 (KVN).

The protein belongs to the class-II fumarase/aspartase family. Fumarase subfamily. Homotetramer.

The protein localises to the cytoplasm. It carries out the reaction (S)-malate = fumarate + H2O. Its pathway is carbohydrate metabolism; tricarboxylic acid cycle; (S)-malate from fumarate: step 1/1. Involved in the TCA cycle. Catalyzes the stereospecific interconversion of fumarate to L-malate. This Neisseria meningitidis serogroup A / serotype 4A (strain DSM 15465 / Z2491) protein is Fumarate hydratase class II.